A 236-amino-acid polypeptide reads, in one-letter code: Syntaxin-8 (236 aa).

Residues 1-215 (MAPDPWFSTY…LVDRKSASCG (215 aa)) lie on the Cytoplasmic side of the membrane. A coiled-coil region spans residues 42–65 (LTIRTLLKNLKVKIDLLKDLLLRA). Residues S102 and S160 each carry the phosphoserine modification. Residues 145–207 (QKIIQEQDAG…RTEARRVTLV (63 aa)) form the t-SNARE coiled-coil homology domain. The helical; Anchor for type IV membrane protein transmembrane segment at 216–232 (MIMVILLLLVAIVVVAV) threads the bilayer. At 233–236 (WPTN) the chain is on the vesicular side.

The protein belongs to the syntaxin family. As to quaternary structure, part of the SNARE core complex containing STX7, VAMP8 and VTI1B. Interacts with VAMP8. Forms a SNARE complex with STX7, VTI1B and VAMP8 which functions in the homotypic fusion of late endosomes. Component of the SNARE complex composed of STX7, STX8, VAMP7 and VTI1B that is required for heterotypic fusion of late endosomes with lysosomes. Interacts with HECTD3. Interacts with TPC1. In terms of processing, ubiquitinated by HECTD3. Widely expressed in all tissues examined.

It is found in the membrane. Vesicle trafficking protein that functions in the early secretory pathway, possibly by mediating retrograde transport from cis-Golgi membranes to the ER. In Rattus norvegicus (Rat), this protein is Syntaxin-8 (Stx8).